Reading from the N-terminus, the 191-residue chain is Abscisic acid receptor PYR1 (191 aa).

The tract at residues 23–176 (YQLDPGSCSS…NLQKLATVAE (154 aa)) is START-like. Position 59 (lysine 59) interacts with abscisate. Position 78 is a phosphothreonine; by CARK1 (threonine 78). Residues 85-89 (SGLPA) carry the Gate loop motif. Abscisate-binding positions include 89–94 (ANTSTE), 116–122 (RLTNYKS), and glutamate 141. The short motif at 115-117 (HRL) is the Latch loop element.

It belongs to the PYR/PYL/RCAR abscisic acid intracellular receptor family. Homodimer. Binds ABA on one subunit only. Interacts with HAB1, AHG3, ABI1 and ABI2 when complexed to ABA, and possibly with other PP2Cs. Binds to CARs protein in an ABA-independent manner, both at the plasma membrane and in the nucleus. Interacts directly with CAR1 and CAR4. Interacts with CARK1 in the cytosol. Interacts with AIP1 in an abscisic acid-dependent manner. Interacts with FREE1 (via N-terminus). Interacts with the E3 ubiquitin-protein ligase RSL1 at the plasma membrane. Ubiquitynated and degraded by the proteasome upon binding to the E3 ubiquitin-protein ligase RSL1 at the plasma membrane. Post-translationally, phosphorylated by CARK1 especially in response to abscisic acid (ABA); this phosphorylation promotes its stability and inhibitory ability to ABI1.

It localises to the cytoplasm. The protein resides in the cytosol. It is found in the nucleus. The protein localises to the cell membrane. Its subcellular location is the vacuole. Receptor for abscisic acid (ABA) required for ABA-mediated responses such as stomatal closure and germination inhibition. Inhibits the activity of group-A protein phosphatases type 2C (PP2Cs) when activated by ABA. Can be activated by both (-)-ABA and (+)-ABA. Promotes drought tolerance. The polypeptide is Abscisic acid receptor PYR1 (Arabidopsis thaliana (Mouse-ear cress)).